A 319-amino-acid chain; its full sequence is Tetrahydromethanopterin S-methyltransferase subunit H (319 aa).

Belongs to the MtrH family. As to quaternary structure, the complex is composed of 8 subunits; MtrA, MtrB, MtrC, MtrD, MtrE, MtrF, MtrG and MtrH.

It catalyses the reaction 5-methyl-5,6,7,8-tetrahydromethanopterin + coenzyme M + 2 Na(+)(in) = 5,6,7,8-tetrahydromethanopterin + methyl-coenzyme M + 2 Na(+)(out). Its pathway is one-carbon metabolism; methanogenesis from CO(2); methyl-coenzyme M from 5,10-methylene-5,6,7,8-tetrahydromethanopterin: step 2/2. Its function is as follows. Part of a complex that catalyzes the formation of methyl-coenzyme M and tetrahydromethanopterin from coenzyme M and methyl-tetrahydromethanopterin. This is an energy-conserving, sodium-ion translocating step. MtrH catalyzes the transfer of the methyl group from methyl-tetrahydromethanopterin to the corrinoid prosthetic group of MtrA. The protein is Tetrahydromethanopterin S-methyltransferase subunit H of Methanococcus maripaludis (strain DSM 14266 / JCM 13030 / NBRC 101832 / S2 / LL).